The sequence spans 322 residues: Sideroflexin-1 (322 aa).

An N-acetylserine modification is found at Ser2. The Mitochondrial matrix portion of the chain corresponds to 2 to 102; the sequence is SGELPPNINI…MSAQVPMNMT (101 aa). A helical transmembrane segment spans residues 103–120; that stretch reads ITGCMMTFYRTTPAVLFW. Residues 121–146 lie on the Mitochondrial intermembrane side of the membrane; sequence QWINQSFNAVVNYTNRSGDAPLTVNE. Residues 147–167 traverse the membrane as a helical segment; the sequence is LGTAYVSATTGAVATALGLNA. At 168-174 the chain is on the mitochondrial matrix side; sequence LTKHVSP. The helical transmembrane segment at 175–195 threads the bilayer; the sequence is LIGRFVPFAAVAAANCINIPL. The Mitochondrial intermembrane segment spans residues 196–228; that stretch reads MRQRELKVGIPVTDENGNRLGESANAAKQAITQ. Residues 229–249 form a helical membrane-spanning segment; sequence VVVSRILMAAPGMAIPPFIMN. At 250–266 the chain is on the mitochondrial matrix side; the sequence is TLEKKAFLKRFPWMSAP. Residues 267–287 form a helical membrane-spanning segment; sequence VQVGIVGFCLVFATPLCCALF. At 288-322 the chain is on the mitochondrial intermembrane side; sequence PQKSSMSVTSLEAELQARIRETYPELRRVYFNKGL.

This sequence belongs to the sideroflexin family.

It localises to the mitochondrion inner membrane. It catalyses the reaction L-serine(in) = L-serine(out). The enzyme catalyses L-alanine(in) = L-alanine(out). It carries out the reaction L-cysteine(in) = L-cysteine(out). Amino acid transporter importing serine, an essential substrate of the mitochondrial branch of the one-carbon pathway, into mitochondria. Mitochondrial serine is then converted to glycine and formate, which exits to the cytosol where it is used to generate the charged folates that serve as one-carbon donors. May also transport other amino acids including alanine and cysteine. This chain is Sideroflexin-1 (SFXN1), found in Bos taurus (Bovine).